A 437-amino-acid chain; its full sequence is Glutamate-1-semialdehyde 2,1-aminomutase 1 (437 aa).

Lys268 bears the N6-(pyridoxal phosphate)lysine mark.

This sequence belongs to the class-III pyridoxal-phosphate-dependent aminotransferase family. HemL subfamily. Homodimer. Pyridoxal 5'-phosphate serves as cofactor.

The protein localises to the cytoplasm. The catalysed reaction is (S)-4-amino-5-oxopentanoate = 5-aminolevulinate. It participates in porphyrin-containing compound metabolism; protoporphyrin-IX biosynthesis; 5-aminolevulinate from L-glutamyl-tRNA(Glu): step 2/2. In Halalkalibacterium halodurans (strain ATCC BAA-125 / DSM 18197 / FERM 7344 / JCM 9153 / C-125) (Bacillus halodurans), this protein is Glutamate-1-semialdehyde 2,1-aminomutase 1.